Reading from the N-terminus, the 348-residue chain is Phosphoribosylformylglycinamidine cyclo-ligase (348 aa).

Belongs to the AIR synthase family.

Its subcellular location is the cytoplasm. The catalysed reaction is 2-formamido-N(1)-(5-O-phospho-beta-D-ribosyl)acetamidine + ATP = 5-amino-1-(5-phospho-beta-D-ribosyl)imidazole + ADP + phosphate + H(+). Its pathway is purine metabolism; IMP biosynthesis via de novo pathway; 5-amino-1-(5-phospho-D-ribosyl)imidazole from N(2)-formyl-N(1)-(5-phospho-D-ribosyl)glycinamide: step 2/2. This is Phosphoribosylformylglycinamidine cyclo-ligase from Geotalea uraniireducens (strain Rf4) (Geobacter uraniireducens).